The sequence spans 1507 residues: Protein similar (1507 aa).

Positions 1–85 (MVSLIDTIEA…KSRDAARCRR (85 aa)) are disordered. Positions 26–49 (SASSSSCSSSFSSSPPSSSVGSPS) are enriched in low complexity. The segment covering 72-85 (KRKEKSRDAARCRR) has biased composition (basic and acidic residues). The bHLH domain maps to 72 to 125 (KRKEKSRDAARCRRSKETEIFMELSAALPLKTDDVNQLDKASVMRITIAFLKIR). 2 consecutive PAS domains span residues 167–240 (NGAE…LAQK) and 307–377 (PHPS…LSKG). One can recognise a PAC domain in the interval 381–422 (TSRYRFLGKYGGYCWILSQATIVYDKLKPQSVVCVNYVISNL). 4 disordered regions span residues 433–459 (QQTA…KAAD), 541–588 (HSPG…PPPT), 706–832 (TCST…CSPN), and 900–951 (YAGN…QAAV). Over residues 439–459 (EQKEQHHQAAETEKEPEKAAD) the composition is skewed to basic and acidic residues. Positions 548-559 (ITAQLLSGSSSG) are enriched in polar residues. Pro residues predominate over residues 578–588 (SPAPPLTPPPT). Residues 692 to 863 (TCLLPEDINS…IDDDMPLLTE (172 aa)) form an ODD region. Residues 706-717 (TCSTTASGQHYQ) show a composition bias toward polar residues. 2 stretches are compositionally biased toward low complexity: residues 718-745 (SPSS…LSPL) and 754-777 (SNPS…QQQH). Polar residues predominate over residues 803–818 (DTSCSQHLHSPSITSK). 3 stretches are compositionally biased toward low complexity: residues 823 to 832 (SSLPSLCSPN), 907 to 918 (QQQQQQPQLQQQ), and 926 to 951 (SSPA…QAAV). A coiled-coil region spans residues 880–908 (KEIDAIQQQLQQLQQQHHQQYAGNTGYQQ). Coiled-coil stretches lie at residues 982–1054 (AEEC…YDVQ) and 1110–1162 (QLLQ…QLQQ). 3 disordered regions span residues 1204-1228 (PQQQ…VESK), 1251-1287 (KDPA…QSNS), and 1356-1460 (FGGS…KTSI). The span at 1413–1423 (SSTSNSTNQAE) shows a compositional bias: polar residues.

Efficient DNA binding requires dimerization with another bHLH protein. Interacts with Vhl. As to expression, ubiquitously expressed in the embryo.

Its subcellular location is the cytoplasm. It is found in the nucleus. Functions as a transcriptional regulator of the adaptive response to hypoxia. Binds to core DNA sequence 5'-[AG]CGTG-3' within the hypoxia response element (HRE) of target gene promoters. This chain is Protein similar (sima), found in Drosophila melanogaster (Fruit fly).